A 394-amino-acid polypeptide reads, in one-letter code: Protein arginine N-methyltransferase 8 (394 aa).

The N-myristoyl glycine moiety is linked to residue Gly-2. The disordered stretch occupies residues 21 to 40 (VESTEVSSAPPQPPQPVIPA). Short sequence motifs (SH3-binding) lie at residues 29-42 (APPQ…PAKP) and 53-58 (PSCPGR). Pro residues predominate over residues 30–39 (PPQPPQPVIP). Arg-58 carries the omega-N-methylarginine; by PRMT8 modification. Arg-73 carries the post-translational modification Asymmetric dimethylarginine; by PRMT8. The region spanning 73-394 (RDYYFDSYAH…TSVSNDYKMR (322 aa)) is the SAM-dependent MTase PRMT-type domain. Residues His-86, Arg-95, Gly-119, 119–122 (GSGT), Glu-141, and Glu-170 contribute to the S-adenosyl-L-methionine site. Active-site residues include Glu-185 and Glu-194.

The protein belongs to the class I-like SAM-binding methyltransferase superfamily. Protein arginine N-methyltransferase family. PRMT8 subfamily. Homodimer. Tetramer; individual homodimers associates to form a homotetramer. Homooctamer; individual homodimers associates to form a homooctamer and homooligomerization is required for proper localization to the cell membrane. Heterodimer with PRMT1; heterodimerization may recruit PRMT1 activity to the plasma membrane. Interacts with PRMT2 (via the SH3 domain). Interacts with FYN (via the SH3 domain). Interacts with EWS; independently of EWS methylation status. As to expression, brain-specific. Only expressed in neurons, especially in the somatosensory and limbic systems, and a part of motor system. Highly expressed in all of the regions related to general somatosensory system. Expressed in most of the relay nuclei intervening the special somatosensory system, such as the auditory, visual and vestibular systems. Also present in forebrain limbic areas and thalamic nuclei relevant to limbic areas and in areas related to the motor system, such as the caudate putamen, Purkinje cells, inferior olivary nucleus and cerebellar nuclei.

It is found in the cell membrane. The catalysed reaction is L-arginyl-[protein] + S-adenosyl-L-methionine = N(omega)-methyl-L-arginyl-[protein] + S-adenosyl-L-homocysteine + H(+). It carries out the reaction L-arginyl-[protein] + 2 S-adenosyl-L-methionine = N(omega),N(omega)-dimethyl-L-arginyl-[protein] + 2 S-adenosyl-L-homocysteine + 2 H(+). Functionally, S-adenosyl-L-methionine-dependent and membrane-associated arginine methyltransferase that can both catalyze the formation of omega-N monomethylarginine (MMA) and asymmetrical dimethylarginine (aDMA) in proteins such as NIFK, myelin basic protein, histone H4, H2A and H2A/H2B dimer. Able to mono- and dimethylate EWS protein; however its precise role toward EWS remains unclear as it still interacts with fully methylated EWS. The protein is Protein arginine N-methyltransferase 8 of Mus musculus (Mouse).